A 138-amino-acid chain; its full sequence is Cysteine desulfuration protein SufE (138 aa).

Cys51 acts as the Cysteine persulfide intermediate in catalysis.

The protein belongs to the SufE family. As to quaternary structure, homodimer. Interacts with SufS.

The protein resides in the cytoplasm. It functions in the pathway cofactor biosynthesis; iron-sulfur cluster biosynthesis. Functionally, participates in cysteine desulfuration mediated by SufS. Cysteine desulfuration mobilizes sulfur from L-cysteine to yield L-alanine and constitutes an essential step in sulfur metabolism for biosynthesis of a variety of sulfur-containing biomolecules. Functions as a sulfur acceptor for SufS, by mediating the direct transfer of the sulfur atom from the S-sulfanylcysteine of SufS, an intermediate product of cysteine desulfuration process. This chain is Cysteine desulfuration protein SufE, found in Sodalis glossinidius (strain morsitans).